The sequence spans 60 residues: Large ribosomal subunit protein bL32 (60 aa).

The interval 1-60 is disordered; that stretch reads MAVQQNKKSPSKRGMHRSHDFLVNPATAIEPNTGETHLRHHISPNGFYRGRKVLKTKADE. The segment covering 49–60 has biased composition (basic residues); that stretch reads RGRKVLKTKADE.

The protein belongs to the bacterial ribosomal protein bL32 family.

The polypeptide is Large ribosomal subunit protein bL32 (Bordetella bronchiseptica (strain ATCC BAA-588 / NCTC 13252 / RB50) (Alcaligenes bronchisepticus)).